Consider the following 185-residue polypeptide: MKTTEYVAEILNELHNSAAYISNEEADQLADHILSSHQIFTAGAGRSGLMAKSFAMRLMHMGFNAHIVGEILTPPLAEGDLVIIGSGSGETKSLIHTAAKAKSLHGIVAALTINPESSIGKQADLIIRMPGSPKDQSNGSYKTIQPMGSLFEQTLLLFYDAVILKLMEKKGLDSETMFTHHANLE.

Positions 29 to 172 (LADHILSSHQ…ILKLMEKKGL (144 aa)) constitute an SIS domain. Residues Ser47 and 86–91 (SGSGET) each bind substrate. Glu152 (proton acceptor) is an active-site residue.

Belongs to the SIS family. PHI subfamily. Homotetramer.

The catalysed reaction is D-arabino-hex-3-ulose 6-phosphate = beta-D-fructose 6-phosphate. Its pathway is one-carbon metabolism; formaldehyde assimilation via RuMP pathway; D-fructose 6-phosphate from D-ribulose 5-phosphate and formaldehyde: step 2/2. Functionally, catalyzes the isomerization between 3-hexulose 6-phosphate and fructose 6-phosphate. Together with HxlA, may act as a formaldehyde detoxification system. The sequence is that of 3-hexulose-6-phosphate isomerase (hxlB) from Bacillus subtilis (strain 168).